Reading from the N-terminus, the 229-residue chain is Acetylcholine-binding protein (229 aa).

Positions 1 to 19 (MRRNIFCLACLWIVQACLS) are cleaved as a signal peptide. A glycan (N-linked (GlcNAc...) asparagine) is linked at N85. The region spanning 114-217 (PEVLTPQLAR…PEAYEDVEVS (104 aa)) is the Ig-like domain. Cysteines 142 and 155 form a disulfide.

In terms of assembly, homopentamer. N-glycosylated. Expressed by glial cells.

The protein resides in the synaptic cleft. In terms of biological role, binds to acetylcholine. Modulates neuronal synaptic transmission. In Lymnaea stagnalis (Great pond snail), this protein is Acetylcholine-binding protein.